The sequence spans 478 residues: Septin-4 (478 aa).

Positions 38 to 115 (VKDFSGNESC…RSPWGKLDPY (78 aa)) are disordered. Positions 95–108 (APAPLSPSARPRSP) are enriched in low complexity. Phosphoserine is present on residues Ser117 and Ser118. In terms of domain architecture, Septin-type G spans 141–414 (KGFDFTLMVA…ENYRAQCIQS (274 aa)). The segment at 151-158 (GESGLGKS) is G1 motif. GTP-binding positions include 151–158 (GESGLGKS) and Thr185. The tract at residues 208-211 (DTPG) is G3 motif. The segment at 289–292 (AKAD) is G4 motif. Position 290–298 (290–298 (KADTLTPPE)) interacts with GTP. A Phosphoserine modification is found at Ser325. Gly348 and Arg363 together coordinate GTP. The disordered stretch occupies residues 425-448 (RNKLTRESGTDLPIPAVPPGTDPE). The residue at position 432 (Ser432) is a Phosphoserine. Position 434 is a phosphothreonine (Thr434). Residues 446 to 478 (DPETEKLIREKDEELRRMQEMLHKIQKQMKETY) adopt a coiled-coil conformation.

It belongs to the TRAFAC class TrmE-Era-EngA-EngB-Septin-like GTPase superfamily. Septin GTPase family. Septins polymerize into heterooligomeric protein complexes that form filaments, and can associate with cellular membranes, actin filaments and microtubules. GTPase activity is required for filament formation. Interacts with SEPTIN8. Component of a septin core octameric complex consisting of SEPTIN12, SEPTIN7, SEPTIN6 and SEPTIN2 or SEPTIN4 in the order 12-7-6-2-2-6-7-12 or 12-7-6-4-4-6-7-12. Interacts with SEPTIN14 (via C-terminus). Interacts with DYRK1A. Interacts with SLC6A3/DAT and SNCA/alpha-synuclein. Interacts with STX1A; in the striatum. Interacts with XIAP (via BIR3 domain) following the induction of apoptosis. Interacts with AREL1 (via HECT domain); in the cytoplasm following induction of apoptosis. In terms of processing, ubiquitinated by AREL1. Phosphorylated by DYRK1A.

The protein localises to the cytoplasm. The protein resides in the cell projection. It is found in the cilium. Its subcellular location is the flagellum. It localises to the cytoplasmic vesicle. The protein localises to the secretory vesicle. The protein resides in the axon. It is found in the dendrite. Its subcellular location is the perikaryon. It localises to the synapse. Its function is as follows. Filament-forming cytoskeletal GTPase. Pro-apoptotic protein involved in LGR5-positive intestinal stem cell and Paneth cell expansion in the intestines, via its interaction with XIAP. May also play a role in the regulation of cell fate in the intestine. Positive regulator of apoptosis involved in hematopoietic stem cell homeostasis; via its interaction with XIAP. Negative regulator of repair and hair follicle regeneration in response to injury, due to inhibition of hair follicle stem cell proliferation, potentially via its interaction with XIAP. Plays an important role in male fertility and sperm motility. During spermiogenesis, essential for the establishment of the annulus (a fibrous ring structure connecting the midpiece and the principal piece of the sperm flagellum) which is a requisite for the structural and mechanical integrity of the sperm. Involved in the migration of cortical neurons and the formation of neuron leading processes during embryonic development. Required for dopaminergic metabolism in presynaptic autoreceptors; potentially via activity as a presynaptic scaffold protein. This chain is Septin-4, found in Pongo abelii (Sumatran orangutan).